Here is a 293-residue protein sequence, read N- to C-terminus: ATP phosphoribosyltransferase (293 aa).

This sequence belongs to the ATP phosphoribosyltransferase family. Long subfamily. It depends on Mg(2+) as a cofactor.

The protein localises to the cytoplasm. The catalysed reaction is 1-(5-phospho-beta-D-ribosyl)-ATP + diphosphate = 5-phospho-alpha-D-ribose 1-diphosphate + ATP. Its pathway is amino-acid biosynthesis; L-histidine biosynthesis; L-histidine from 5-phospho-alpha-D-ribose 1-diphosphate: step 1/9. Its activity is regulated as follows. Feedback inhibited by histidine. In terms of biological role, catalyzes the condensation of ATP and 5-phosphoribose 1-diphosphate to form N'-(5'-phosphoribosyl)-ATP (PR-ATP). Has a crucial role in the pathway because the rate of histidine biosynthesis seems to be controlled primarily by regulation of HisG enzymatic activity. The chain is ATP phosphoribosyltransferase from Nitratidesulfovibrio vulgaris (strain DSM 19637 / Miyazaki F) (Desulfovibrio vulgaris).